Reading from the N-terminus, the 385-residue chain is 3,5,7-trioxododecanoyl-CoA synthase (385 aa).

The active site involves Cys-157.

Belongs to the thiolase-like superfamily. Chalcone/stilbene synthases family. As to expression, expressed in bracts, flowers and young leaves. Not detected in mature leaves, roots and stems. Expressed in glandular trichomes.

It carries out the reaction hexanoyl-CoA + 3 malonyl-CoA + 3 H(+) = 3,5,7-trioxododecanoyl-CoA + 3 CO2 + 3 CoA. The enzyme catalyses 3,5,7-trioxododecanoyl-CoA = olivetol + CO2 + CoA. It participates in secondary metabolite biosynthesis; terpenoid biosynthesis. In terms of biological role, involved in the biosynthesis of cannabinoids-related terpenophenolic natural products, which have pharmacological activity. Polyketide synthase responsible for olivetol biosynthesis, from a C(12)-polyketide, probably 3,5,7-trioxododecanoyl-CoA. Catalyzes the first step in the cannabinoids biosynthetic pathway. The preferred substrate is hexanoyl-CoA, but also accepts CoA esters with C4 to C8 aliphatic side chains. When using malonyl-CoA and hexanoyl-CoA as substrates, produces undetermined compounds distinct form olivetol or olivetolic acid that could be hexanoyl triacetic acid lactone (HTAL) and pentyl diacetic acid lactone (PDAL). Produces olivetolic acid when acting in concert with olivetolic acid cyclase (OAC). The protein is 3,5,7-trioxododecanoyl-CoA synthase of Cannabis sativa (Hemp).